A 117-amino-acid polypeptide reads, in one-letter code: Immunoglobulin kappa variable 1-27 (117 aa).

An N-terminal signal peptide occupies residues Met-1–Cys-22. Residues Asp-23 to Cys-45 are framework-1. An Ig-like domain is found at Asp-23–Pro-117. Residues Cys-45 and Cys-110 are joined by a disulfide bond. Residues Arg-46–Ala-56 are complementarity-determining-1. A framework-2 region spans residues Trp-57–Tyr-71. Positions Ala-72 to Ser-78 are complementarity-determining-2. A framework-3 region spans residues Gly-79 to Cys-110. The tract at residues Gln-111–Pro-117 is complementarity-determining-3.

As to quaternary structure, immunoglobulins are composed of two identical heavy chains and two identical light chains; disulfide-linked.

The protein localises to the secreted. It localises to the cell membrane. V region of the variable domain of immunoglobulin light chains that participates in the antigen recognition. Immunoglobulins, also known as antibodies, are membrane-bound or secreted glycoproteins produced by B lymphocytes. In the recognition phase of humoral immunity, the membrane-bound immunoglobulins serve as receptors which, upon binding of a specific antigen, trigger the clonal expansion and differentiation of B lymphocytes into immunoglobulins-secreting plasma cells. Secreted immunoglobulins mediate the effector phase of humoral immunity, which results in the elimination of bound antigens. The antigen binding site is formed by the variable domain of one heavy chain, together with that of its associated light chain. Thus, each immunoglobulin has two antigen binding sites with remarkable affinity for a particular antigen. The variable domains are assembled by a process called V-(D)-J rearrangement and can then be subjected to somatic hypermutations which, after exposure to antigen and selection, allow affinity maturation for a particular antigen. The polypeptide is Immunoglobulin kappa variable 1-27 (Homo sapiens (Human)).